The primary structure comprises 247 residues: Uracil-DNA glycosylase (247 aa).

Asp-83 (proton acceptor) is an active-site residue.

It belongs to the uracil-DNA glycosylase (UDG) superfamily. UNG family.

The protein localises to the cytoplasm. The catalysed reaction is Hydrolyzes single-stranded DNA or mismatched double-stranded DNA and polynucleotides, releasing free uracil.. Functionally, excises uracil residues from the DNA which can arise as a result of misincorporation of dUMP residues by DNA polymerase or due to deamination of cytosine. The chain is Uracil-DNA glycosylase from Deinococcus radiodurans (strain ATCC 13939 / DSM 20539 / JCM 16871 / CCUG 27074 / LMG 4051 / NBRC 15346 / NCIMB 9279 / VKM B-1422 / R1).